The following is a 313-amino-acid chain: uncharacterized protein (313 aa).

A disordered region spans residues 1-313 (MSRNGRNDYD…SSSRSGSSRR (313 aa)). Basic and acidic residues-rich tracts occupy residues 24 to 33 (LARDRERDSE), 40 to 85 (TGER…DVKY), 95 to 116 (TTREARERNSRTARSEERDELG), and 156 to 181 (TDERHSDAFRMEHRRLAEERERDEFG). Over residues 194 to 205 (RGRRSNSRRRSS) the composition is skewed to basic residues. Composition is skewed to low complexity over residues 206–266 (NARS…GSKS) and 272–313 (SRSG…SSRR).

The protein resides in the virion. This is an uncharacterized protein from Acanthamoeba polyphaga mimivirus (APMV).